The chain runs to 200 residues: ATP-dependent Clp protease proteolytic subunit 1 (200 aa).

S98 (nucleophile) is an active-site residue. H123 is a catalytic residue.

Belongs to the peptidase S14 family. In terms of assembly, fourteen ClpP subunits assemble into 2 heptameric rings which stack back to back to give a disk-like structure with a central cavity, resembling the structure of eukaryotic proteasomes.

The protein localises to the cytoplasm. The enzyme catalyses Hydrolysis of proteins to small peptides in the presence of ATP and magnesium. alpha-casein is the usual test substrate. In the absence of ATP, only oligopeptides shorter than five residues are hydrolyzed (such as succinyl-Leu-Tyr-|-NHMec, and Leu-Tyr-Leu-|-Tyr-Trp, in which cleavage of the -Tyr-|-Leu- and -Tyr-|-Trp bonds also occurs).. In terms of biological role, cleaves peptides in various proteins in a process that requires ATP hydrolysis. Has a chymotrypsin-like activity. Plays a major role in the degradation of misfolded proteins. This Mycobacterium bovis (strain ATCC BAA-935 / AF2122/97) protein is ATP-dependent Clp protease proteolytic subunit 1.